A 156-amino-acid chain; its full sequence is SsrA-binding protein (156 aa).

The protein belongs to the SmpB family.

It is found in the cytoplasm. Required for rescue of stalled ribosomes mediated by trans-translation. Binds to transfer-messenger RNA (tmRNA), required for stable association of tmRNA with ribosomes. tmRNA and SmpB together mimic tRNA shape, replacing the anticodon stem-loop with SmpB. tmRNA is encoded by the ssrA gene; the 2 termini fold to resemble tRNA(Ala) and it encodes a 'tag peptide', a short internal open reading frame. During trans-translation Ala-aminoacylated tmRNA acts like a tRNA, entering the A-site of stalled ribosomes, displacing the stalled mRNA. The ribosome then switches to translate the ORF on the tmRNA; the nascent peptide is terminated with the 'tag peptide' encoded by the tmRNA and targeted for degradation. The ribosome is freed to recommence translation, which seems to be the essential function of trans-translation. The protein is SsrA-binding protein of Staphylococcus epidermidis (strain ATCC 35984 / DSM 28319 / BCRC 17069 / CCUG 31568 / BM 3577 / RP62A).